The primary structure comprises 228 residues: NAD(P)H-hydrate epimerase (228 aa).

One can recognise a YjeF N-terminal domain in the interval 9–209 (VRAVERLAHR…LLGLTPAFLA (201 aa)). Residue 53-57 (NNGGD) coordinates (6S)-NADPHX. K(+) contacts are provided by asparagine 54 and aspartate 115. (6S)-NADPHX contacts are provided by residues 119 to 125 (GIGLARP) and aspartate 148. Serine 151 serves as a coordination point for K(+).

Belongs to the NnrE/AIBP family. The cofactor is K(+).

The catalysed reaction is (6R)-NADHX = (6S)-NADHX. It catalyses the reaction (6R)-NADPHX = (6S)-NADPHX. Catalyzes the epimerization of the S- and R-forms of NAD(P)HX, a damaged form of NAD(P)H that is a result of enzymatic or heat-dependent hydration. This is a prerequisite for the S-specific NAD(P)H-hydrate dehydratase to allow the repair of both epimers of NAD(P)HX. The protein is NAD(P)H-hydrate epimerase of Bordetella parapertussis (strain 12822 / ATCC BAA-587 / NCTC 13253).